An 86-amino-acid polypeptide reads, in one-letter code: BolA-like protein 2 (86 aa).

Methionine 1 bears the N-acetylmethionine mark.

The protein belongs to the BolA/IbaG family. As to quaternary structure, interacts with GLRX3; forms a heterotrimeric complex composed by two BOLA2 molecules and one GLRX3 molecule; linked by [2Fe-2S] clusters.

Its subcellular location is the cytoplasm. The protein localises to the nucleus. Functionally, acts as a cytosolic iron-sulfur (Fe-S) cluster assembly factor that facilitates [2Fe-2S] cluster insertion into a subset of cytosolic proteins. Acts together with the monothiol glutaredoxin GLRX3. The sequence is that of BolA-like protein 2 (BOLA2) from Homo sapiens (Human).